The sequence spans 490 residues: Subtilisin-like protease 8 (490 aa).

The signal sequence occupies residues 1–26 (MKGLLSLSVLPVLAYASPMIVDSIHQ). The propeptide occupies 27–134 (NAAPILSSTN…YIERDSEVHT (108 aa)). In terms of domain architecture, Inhibitor I9 spans 43–134 (SYIVVFKKGV…YIERDSEVHT (92 aa)). A Peptidase S8 domain is found at 144–450 (PWGLARISHR…GGSDDYKKII (307 aa)). Residues D180 and H212 each act as charge relay system in the active site. A glycan (N-linked (GlcNAc...) asparagine) is linked at N282. The active-site Charge relay system is S378. N456 carries an N-linked (GlcNAc...) asparagine glycan.

The protein belongs to the peptidase S8 family.

Its subcellular location is the secreted. Its function is as follows. Secreted subtilisin-like serine protease with keratinolytic activity that contributes to pathogenicity. In Arthroderma benhamiae (strain ATCC MYA-4681 / CBS 112371) (Trichophyton mentagrophytes), this protein is Subtilisin-like protease 8 (SUB8).